Consider the following 405-residue polypeptide: Cysteine desulfurase IscS (405 aa).

Pyridoxal 5'-phosphate contacts are provided by residues 75 to 76 (AT), Asn-156, Gln-184, and 204 to 206 (SAH). Lys-207 is modified (N6-(pyridoxal phosphate)lysine). Thr-244 lines the pyridoxal 5'-phosphate pocket. The active-site Cysteine persulfide intermediate is the Cys-329. Cys-329 contacts [2Fe-2S] cluster.

It belongs to the class-V pyridoxal-phosphate-dependent aminotransferase family. NifS/IscS subfamily. In terms of assembly, homodimer. Forms a heterotetramer with IscU, interacts with other sulfur acceptors. It depends on pyridoxal 5'-phosphate as a cofactor.

The protein resides in the cytoplasm. It catalyses the reaction (sulfur carrier)-H + L-cysteine = (sulfur carrier)-SH + L-alanine. The protein operates within cofactor biosynthesis; iron-sulfur cluster biosynthesis. Functionally, master enzyme that delivers sulfur to a number of partners involved in Fe-S cluster assembly, tRNA modification or cofactor biosynthesis. Catalyzes the removal of elemental sulfur atoms from cysteine to produce alanine. Functions as a sulfur delivery protein for Fe-S cluster synthesis onto IscU, an Fe-S scaffold assembly protein, as well as other S acceptor proteins. This is Cysteine desulfurase IscS from Methylobacillus flagellatus (strain ATCC 51484 / DSM 6875 / VKM B-1610 / KT).